We begin with the raw amino-acid sequence, 175 residues long: Capsid protein (175 aa).

The disordered stretch occupies residues 1-35 (MFRQEMARYPKKSIKKRRVGRRKYGSKAATSHDYS). The span at 9 to 25 (YPKKSIKKRRVGRRKYG) shows a compositional bias: basic residues.

It belongs to the nanoviridae capsid protein family.

The protein resides in the virion. This chain is Capsid protein (DNA-S), found in Musa (BBTV).